Reading from the N-terminus, the 430-residue chain is MTSVVVVGTQWGDEGKGKITDFLSADAEVIARYQGGDNAGHTIVIDGKKFKLHLIPSGIFFPEKISVIGNGVVVNPKSLVKELAYLHEEGITTDNLRISDRAHVILPYHIKLDQLQEDAKGDNKIGTTIKGIGPAYMDKAARVGIRIADLLDKEIFAERLRINLAEKNRLFEKMYDSEALDFDSIFEEYYAYGQEIKKYVTDTSVILNDALDAGKRVLFEGAQGVMLDIDQGTYPFVTSSNPVAGGVTIGSGVGPSKINKVVGVCKAYTSRVGDGPFPTELFDEVGDRIREVGHEYGTTTGRPRRVGWFDSVVMRHSRRVSGITNLSLNSIDVLSGLDTVKICVAYDLDGERIDYYPASLEQLKRCKPIYEELPGWSEDITGVRSLDDLPENARNYVRRVSELVGVRISTFSVGPGREQTNILESVWANI.

GTP-binding positions include 12–18 (GDEGKGK) and 40–42 (GHT). Residue aspartate 13 is the Proton acceptor of the active site. Residues aspartate 13 and glycine 40 each coordinate Mg(2+). IMP is bound by residues 13–16 (DEGK), 38–41 (NAGH), threonine 128, arginine 142, glutamine 223, threonine 238, and arginine 302. Histidine 41 serves as the catalytic Proton donor. 298 to 304 (TTTGRPR) serves as a coordination point for substrate. GTP-binding positions include arginine 304, 330-332 (SID), and 412-414 (SVG).

This sequence belongs to the adenylosuccinate synthetase family. In terms of assembly, homodimer. Mg(2+) is required as a cofactor.

It localises to the cytoplasm. It carries out the reaction IMP + L-aspartate + GTP = N(6)-(1,2-dicarboxyethyl)-AMP + GDP + phosphate + 2 H(+). The protein operates within purine metabolism; AMP biosynthesis via de novo pathway; AMP from IMP: step 1/2. Plays an important role in the de novo pathway of purine nucleotide biosynthesis. Catalyzes the first committed step in the biosynthesis of AMP from IMP. This Streptococcus uberis (strain ATCC BAA-854 / 0140J) protein is Adenylosuccinate synthetase.